A 440-amino-acid polypeptide reads, in one-letter code: tRNA-2-methylthio-N(6)-dimethylallyladenosine synthase (440 aa).

Positions 5–121 (KKLYIKTYGC…LPEMEAKAGT (117 aa)) constitute an MTTase N-terminal domain. [4Fe-4S] cluster-binding residues include C14, C50, C84, C159, C163, and C166. The Radical SAM core domain occupies 145–378 (AKRGPTAFLT…LTRQQREVQD (234 aa)). A TRAM domain is found at 378-440 (DSMVGRELGV…ANSLAGELID (63 aa)).

It belongs to the methylthiotransferase family. MiaB subfamily. Monomer. [4Fe-4S] cluster serves as cofactor.

The protein localises to the cytoplasm. It catalyses the reaction N(6)-dimethylallyladenosine(37) in tRNA + (sulfur carrier)-SH + AH2 + 2 S-adenosyl-L-methionine = 2-methylsulfanyl-N(6)-dimethylallyladenosine(37) in tRNA + (sulfur carrier)-H + 5'-deoxyadenosine + L-methionine + A + S-adenosyl-L-homocysteine + 2 H(+). Functionally, catalyzes the methylthiolation of N6-(dimethylallyl)adenosine (i(6)A), leading to the formation of 2-methylthio-N6-(dimethylallyl)adenosine (ms(2)i(6)A) at position 37 in tRNAs that read codons beginning with uridine. This chain is tRNA-2-methylthio-N(6)-dimethylallyladenosine synthase, found in Ruegeria sp. (strain TM1040) (Silicibacter sp.).